The chain runs to 476 residues: CBL-interacting protein kinase 30 (476 aa).

One can recognise a Protein kinase domain in the interval 17-272 (YKLGRLLGRG…ISKIMDRPWF (256 aa)). ATP-binding positions include 23-31 (LGRGTFAKV) and lysine 46. The active-site Proton acceptor is the aspartate 140. Residues 158-187 (DFGLSALDGGLRGDGLLHTTCGTPAYVAPE) form an activation loop region. The interval 296–315 (KEASQQHDDEEDDGFAREKK) is disordered. The NAF domain occupies 299 to 353 (SQQHDDEEDDGFAREKKKRSNVIMSSPVIDVRPSSMNAFDIISRSRGLDLSKMFD). The PPI stretch occupies residues 358–387 (RSEARFSTRETTTAIVSKLEEIAEAGRFSF).

Belongs to the protein kinase superfamily. CAMK Ser/Thr protein kinase family. SNF1 subfamily. It depends on Mn(2+) as a cofactor.

It carries out the reaction L-seryl-[protein] + ATP = O-phospho-L-seryl-[protein] + ADP + H(+). The enzyme catalyses L-threonyl-[protein] + ATP = O-phospho-L-threonyl-[protein] + ADP + H(+). CIPK serine-threonine protein kinases interact with CBL proteins. Binding of a CBL protein to the regulatory NAF domain of CIPK protein lead to the activation of the kinase in a calcium-dependent manner. The sequence is that of CBL-interacting protein kinase 30 (CIPK30) from Oryza sativa subsp. japonica (Rice).